We begin with the raw amino-acid sequence, 341 residues long: MARITLAEIADKLGAELRGDGSVEIQSIAGMEKAAEGQITFLSASKYRKHLAECQASAVMLKEADLPFFDGNALVLKDPYLGYALLAQLLDTTPKSASNIAPSAYIADDAIIGEGAAIGHNAVIESGAQIGANVQIGAGCFIGQNAVIGAGSKVWANVSIYHSVTLGSDCLVQSGAVIGSDGFGYANDRGKWVKIPQLGSVHVGNNVEIGACTTIDRGALDDTVIADGVIIDNHCQIAHNVSIGENTAIAGATTMAGSLKIGKHCFIGGATVINGHIEITDGVTITGMGMVMRPISEPGVYSSGIPLQTNREWRKTAARVMKIEEMNKRLKSVEKKLNESN.

His-239 serves as the catalytic Proton acceptor.

It belongs to the transferase hexapeptide repeat family. LpxD subfamily. Homotrimer.

It catalyses the reaction a UDP-3-O-[(3R)-3-hydroxyacyl]-alpha-D-glucosamine + a (3R)-hydroxyacyl-[ACP] = a UDP-2-N,3-O-bis[(3R)-3-hydroxyacyl]-alpha-D-glucosamine + holo-[ACP] + H(+). It participates in bacterial outer membrane biogenesis; LPS lipid A biosynthesis. In terms of biological role, catalyzes the N-acylation of UDP-3-O-acylglucosamine using 3-hydroxyacyl-ACP as the acyl donor. Is involved in the biosynthesis of lipid A, a phosphorylated glycolipid that anchors the lipopolysaccharide to the outer membrane of the cell. The chain is UDP-3-O-acylglucosamine N-acyltransferase from Photobacterium profundum (strain SS9).